Reading from the N-terminus, the 421-residue chain is UDP-N-acetylglucosamine 1-carboxyvinyltransferase (421 aa).

22–23 provides a ligand contact to phosphoenolpyruvate; that stretch reads KN. A UDP-N-acetyl-alpha-D-glucosamine-binding site is contributed by Arg-95. Cys-119 (proton donor) is an active-site residue. Cys-119 is subject to 2-(S-cysteinyl)pyruvic acid O-phosphothioketal. UDP-N-acetyl-alpha-D-glucosamine-binding positions include 124–128, Asp-309, and Ile-331; that span reads RPVDQ.

Belongs to the EPSP synthase family. MurA subfamily.

It localises to the cytoplasm. The catalysed reaction is phosphoenolpyruvate + UDP-N-acetyl-alpha-D-glucosamine = UDP-N-acetyl-3-O-(1-carboxyvinyl)-alpha-D-glucosamine + phosphate. The protein operates within cell wall biogenesis; peptidoglycan biosynthesis. Functionally, cell wall formation. Adds enolpyruvyl to UDP-N-acetylglucosamine. The chain is UDP-N-acetylglucosamine 1-carboxyvinyltransferase from Leptothrix cholodnii (strain ATCC 51168 / LMG 8142 / SP-6) (Leptothrix discophora (strain SP-6)).